A 442-amino-acid polypeptide reads, in one-letter code: D-serine dehydratase (442 aa).

Position 118 is an N6-(pyridoxal phosphate)lysine (K118).

Belongs to the serine/threonine dehydratase family. DsdA subfamily. As to quaternary structure, monomer. It depends on pyridoxal 5'-phosphate as a cofactor.

The catalysed reaction is D-serine = pyruvate + NH4(+). This chain is D-serine dehydratase, found in Escherichia coli (strain K12 / MC4100 / BW2952).